The primary structure comprises 183 residues: Thymidine kinase (183 aa).

11-18 (GPMFSGKT) provides a ligand contact to ATP. The active-site Proton acceptor is glutamate 89. Position 119 (phenylalanine 119) interacts with substrate. 2 residues coordinate Zn(2+): cysteine 144 and cysteine 147. 163–167 (VMDIG) provides a ligand contact to substrate. The Zn(2+) site is built by cysteine 176 and cysteine 179.

This sequence belongs to the thymidine kinase family.

The catalysed reaction is thymidine + ATP = dTMP + ADP + H(+). The chain is Thymidine kinase (TK) from Vertebrata (FPV).